Reading from the N-terminus, the 497-residue chain is Ethanolamine-phosphate phospho-lyase (497 aa).

The residue at position 278 (Lys-278) is an N6-(pyridoxal phosphate)lysine. The interval 440–497 is disordered; it reads TGAETESGISKNTPCRTKMPKEAQSELLRDSSLESRENPSQKRNGLCTDSLLSKRLRT. Positions 458–479 are enriched in basic and acidic residues; sequence MPKEAQSELLRDSSLESRENPS.

It belongs to the class-III pyridoxal-phosphate-dependent aminotransferase family. As to quaternary structure, homotetramer. The cofactor is pyridoxal 5'-phosphate.

The protein resides in the mitochondrion. It carries out the reaction phosphoethanolamine + H2O = acetaldehyde + NH4(+) + phosphate. In terms of biological role, catalyzes the pyridoxal-phosphate-dependent breakdown of phosphoethanolamine, converting it to ammonia, inorganic phosphate and acetaldehyde. The chain is Ethanolamine-phosphate phospho-lyase (ETNPPL) from Bos taurus (Bovine).